The following is a 506-amino-acid chain: GTPase Der (506 aa).

2 consecutive EngA-type G domains span residues 3 to 166 and 218 to 391; these read PVVA…GEQL and IKIA…ACAT. Residues 9 to 16, 56 to 60, 118 to 121, 224 to 231, 271 to 275, and 336 to 339 contribute to the GTP site; these read GRPNVGKS, DTGGI, NKTD, DTAGV, and NKWD. The KH-like domain maps to 392 to 476; that stretch reads QKTSTSMLTR…PIRIQFQEGN (85 aa).

It belongs to the TRAFAC class TrmE-Era-EngA-EngB-Septin-like GTPase superfamily. EngA (Der) GTPase family. As to quaternary structure, associates with the 50S ribosomal subunit.

GTPase that plays an essential role in the late steps of ribosome biogenesis. In Actinobacillus pleuropneumoniae serotype 3 (strain JL03), this protein is GTPase Der.